The following is a 306-amino-acid chain: MAGSHDFGKVAVLLGGRSAEREISLESGKAVLDALRSSGVDAHPFDPSEQHMDALLQQGYTRAHIALHGRYGEDGTVQGALELLGIPYTGSGVLASALAMDKWRTKLLWQSAGINTPRHILLDEQSDFDAVAKELGLPLIVKPSREGSTIGLSKVREAGEVAAAWHLAARHDAMVLAEQFIEGTELTASILGDVALPLVRIQVEGDLYDYQAKYLSDKTQYFCPSGVSEEQECLIRKQALQAHRLLGCEGWGRVDLILDKSGTPYFLEANTSPGMTTHSLVPMAAKAAGISFEELVLKILGLAHVG.

An ATP-grasp domain is found at 106 to 301; sequence KLLWQSAGIN…FEELVLKILG (196 aa). ATP is bound at residue 132-187; the sequence is AKELGLPLIVKPSREGSTIGLSKVREAGEVAAAWHLAARHDAMVLAEQFIEGTELT. Mg(2+)-binding residues include aspartate 255, glutamate 268, and asparagine 270.

The protein belongs to the D-alanine--D-alanine ligase family. Mg(2+) is required as a cofactor. Mn(2+) serves as cofactor.

It localises to the cytoplasm. It carries out the reaction 2 D-alanine + ATP = D-alanyl-D-alanine + ADP + phosphate + H(+). Its pathway is cell wall biogenesis; peptidoglycan biosynthesis. Functionally, cell wall formation. The protein is D-alanine--D-alanine ligase of Nitrosospira multiformis (strain ATCC 25196 / NCIMB 11849 / C 71).